The chain runs to 94 residues: Exodeoxyribonuclease 7 small subunit (94 aa).

It belongs to the XseB family. As to quaternary structure, heterooligomer composed of large and small subunits.

The protein resides in the cytoplasm. It catalyses the reaction Exonucleolytic cleavage in either 5'- to 3'- or 3'- to 5'-direction to yield nucleoside 5'-phosphates.. In terms of biological role, bidirectionally degrades single-stranded DNA into large acid-insoluble oligonucleotides, which are then degraded further into small acid-soluble oligonucleotides. In Trichormus variabilis (strain ATCC 29413 / PCC 7937) (Anabaena variabilis), this protein is Exodeoxyribonuclease 7 small subunit.